The primary structure comprises 94 residues: Pyrimidine/purine nucleoside phosphorylase (94 aa).

Belongs to the nucleoside phosphorylase PpnP family.

It catalyses the reaction a purine D-ribonucleoside + phosphate = a purine nucleobase + alpha-D-ribose 1-phosphate. It carries out the reaction adenosine + phosphate = alpha-D-ribose 1-phosphate + adenine. The catalysed reaction is cytidine + phosphate = cytosine + alpha-D-ribose 1-phosphate. The enzyme catalyses guanosine + phosphate = alpha-D-ribose 1-phosphate + guanine. It catalyses the reaction inosine + phosphate = alpha-D-ribose 1-phosphate + hypoxanthine. It carries out the reaction thymidine + phosphate = 2-deoxy-alpha-D-ribose 1-phosphate + thymine. The catalysed reaction is uridine + phosphate = alpha-D-ribose 1-phosphate + uracil. The enzyme catalyses xanthosine + phosphate = alpha-D-ribose 1-phosphate + xanthine. Functionally, catalyzes the phosphorolysis of diverse nucleosides, yielding D-ribose 1-phosphate and the respective free bases. Can use uridine, adenosine, guanosine, cytidine, thymidine, inosine and xanthosine as substrates. Also catalyzes the reverse reactions. The polypeptide is Pyrimidine/purine nucleoside phosphorylase (Citrobacter koseri (strain ATCC BAA-895 / CDC 4225-83 / SGSC4696)).